A 654-amino-acid polypeptide reads, in one-letter code: Fatty acid photodecarboxylase, chloroplastic (654 aa).

The transit peptide at 1–62 (MASITSRASA…RRGGALSARA (62 aa)) directs the protein to the chloroplast. Residues 93-94 (TA), glutamate 114, leucine 162, serine 166, 170-173 (NATL), and valine 298 contribute to the FAD site. Residues cysteine 432, arginine 451, tyrosine 466, and glutamine 486 each coordinate hexadecanoate. Glycine 622 is an FAD binding site.

It belongs to the GMC oxidoreductase family. FAD serves as cofactor.

The protein localises to the plastid. It localises to the chloroplast. The catalysed reaction is a long-chain fatty acid + hnu + H(+) = a long-chain alkane + CO2. It carries out the reaction hnu + hexadecanoate + H(+) = pentadecane + CO2. It catalyses the reaction hnu + octadecanoate + H(+) = heptadecane + CO2. The enzyme catalyses heptadecanoate + hnu + H(+) = hexadecane + CO2. The catalysed reaction is hnu + tetradecanoate + H(+) = tridecane + CO2. It carries out the reaction octanoate + hnu + H(+) = heptane + CO2. With respect to regulation, activated by blue light and repressed by red light. Catalyzes the decarboxylation of free fatty acids to n-alkanes or n-alkenes in response to blue light. Substrate preference is toward fatty acids with C16 or C17 chains. Converts n-octanoic acid (C8 chain) more efficiently than palmitate (n-hexadecanoic acid, C16 chain) into n-heptane (C7 chain) and n-pentadecane (C15 chain), respectively, partly due to an autocatalytic effect of its n-heptane product. Saturated fatty acids are converted to alkanes, not alkenes. The decarboxylation is initiated through electron abstraction from the fatty acid by the photo-excited FAD. This is Fatty acid photodecarboxylase, chloroplastic from Chlorella variabilis (Green alga).